We begin with the raw amino-acid sequence, 217 residues long: Ras-related protein RABA1g (217 aa).

A GTP-binding site is contributed by 20 to 27 (GDSGVGKS). The Effector region signature appears at 42-50 (SKSTIGVEF). Residues 68-72 (DTAGQ), 126-129 (NKAD), and 156-157 (SA) contribute to the GTP site. S-geranylgeranyl cysteine attachment occurs at residues cysteine 214 and cysteine 215.

The protein belongs to the small GTPase superfamily. Rab family.

Its subcellular location is the cell membrane. Intracellular vesicle trafficking and protein transport. This Arabidopsis thaliana (Mouse-ear cress) protein is Ras-related protein RABA1g (RABA1G).